The following is an 837-amino-acid chain: Probable aldehyde oxidase 4 (837 aa).

The region spanning 9-98 (ERVVFELNGE…FCSIITTEGL (90 aa)) is the 2Fe-2S ferredoxin-type domain. 4 residues coordinate [2Fe-2S] cluster: cysteine 50, cysteine 55, cysteine 58, and cysteine 80. Positions 240 to 427 (ISGPREGWYC…LSIFIPHWAS (188 aa)) constitute an FAD-binding PCMH-type domain.

The protein belongs to the xanthine dehydrogenase family. As to quaternary structure, aldehyde oxidases (AO) are homodimers and heterodimers of AO subunits. [2Fe-2S] cluster serves as cofactor. It depends on FAD as a cofactor. Mo-molybdopterin is required as a cofactor.

The enzyme catalyses an aldehyde + O2 + H2O = a carboxylate + H2O2 + H(+). The polypeptide is Probable aldehyde oxidase 4 (Oryza sativa subsp. japonica (Rice)).